An 856-amino-acid polypeptide reads, in one-letter code: Rod cGMP-specific 3',5'-cyclic phosphodiesterase subunit beta (856 aa).

Residue S2 is modified to N-acetylserine. 2 GAF domains span residues 71–220 (NMER…TLNL) and 252–429 (DIER…GWSV). Residues 481–814 (EEDELGILLK…KEWKALADEY (334 aa)) enclose the PDEase domain. H557 functions as the Proton donor in the catalytic mechanism. H561, H597, D598, and D718 together coordinate a divalent metal cation. Over residues 823 to 833 (EEKQQQEDRTT) the composition is skewed to basic and acidic residues. The segment at 823–842 (EEKQQQEDRTTAKKAGTEIC) is disordered. A lipid anchor (S-geranylgeranyl cysteine) is attached at C853. The propeptide at 854–856 (CIL) is removed in mature form.

It belongs to the cyclic nucleotide phosphodiesterase family. As to quaternary structure, oligomer composed of two catalytic chains (alpha and beta), an inhibitory chain (gamma) and the delta chain. A divalent metal cation is required as a cofactor.

Its subcellular location is the membrane. The protein resides in the cell projection. It is found in the cilium. The protein localises to the photoreceptor outer segment. It carries out the reaction 3',5'-cyclic GMP + H2O = GMP + H(+). Functionally, rod-specific cGMP phosphodiesterase that catalyzes the hydrolysis of 3',5'-cyclic GMP. Necessary for the formation of a functional phosphodiesterase holoenzyme. Involved in retinal circadian rhythm photoentrainment via modulation of UVA and orange light-induced phase-shift of the retina clock. May participate in processes of transmission and amplification of the visual signal. The sequence is that of Rod cGMP-specific 3',5'-cyclic phosphodiesterase subunit beta from Canis lupus familiaris (Dog).